Consider the following 573-residue polypeptide: NEDD4-binding protein 3-A (573 aa).

2 disordered regions span residues 168–216 (LNTM…INSL) and 382–407 (LRGE…EDSK). 2 stretches are compositionally biased toward polar residues: residues 184-196 (QPSN…QSES) and 207-216 (DSRQNSINSL). A coiled-coil region spans residues 289-539 (VEDVARQLEE…KEIQSSYREM (251 aa)).

Belongs to the N4BP3 family.

The protein localises to the cytoplasmic vesicle. The protein resides in the cell projection. Its subcellular location is the axon. It is found in the dendrite. In terms of biological role, plays a role in axon and dendrite arborization during cranial nerve development. Also important for neural crest migration and early development of other anterior structures including eye, brain and cranial cartilage. This is NEDD4-binding protein 3-A from Xenopus laevis (African clawed frog).